Here is a 102-residue protein sequence, read N- to C-terminus: Large ribosomal subunit protein uL24 (102 aa).

The protein belongs to the universal ribosomal protein uL24 family. Part of the 50S ribosomal subunit.

One of two assembly initiator proteins, it binds directly to the 5'-end of the 23S rRNA, where it nucleates assembly of the 50S subunit. Its function is as follows. One of the proteins that surrounds the polypeptide exit tunnel on the outside of the subunit. The polypeptide is Large ribosomal subunit protein uL24 (Polynucleobacter asymbioticus (strain DSM 18221 / CIP 109841 / QLW-P1DMWA-1) (Polynucleobacter necessarius subsp. asymbioticus)).